Here is a 437-residue protein sequence, read N- to C-terminus: Nicotinate phosphoribosyltransferase (437 aa).

Histidine 231 bears the Phosphohistidine; by autocatalysis mark.

The protein belongs to the NAPRTase family. Post-translationally, transiently phosphorylated on a His residue during the reaction cycle. Phosphorylation strongly increases the affinity for substrates and increases the rate of nicotinate D-ribonucleotide production. Dephosphorylation regenerates the low-affinity form of the enzyme, leading to product release.

It carries out the reaction nicotinate + 5-phospho-alpha-D-ribose 1-diphosphate + ATP + H2O = nicotinate beta-D-ribonucleotide + ADP + phosphate + diphosphate. The protein operates within cofactor biosynthesis; NAD(+) biosynthesis; nicotinate D-ribonucleotide from nicotinate: step 1/1. Catalyzes the synthesis of beta-nicotinate D-ribonucleotide from nicotinate and 5-phospho-D-ribose 1-phosphate at the expense of ATP. The polypeptide is Nicotinate phosphoribosyltransferase (Vibrio vulnificus (strain YJ016)).